The primary structure comprises 562 residues: Methionine--tRNA ligase, mitochondrial (562 aa).

The transit peptide at 1–10 (MLRSLALRTF) directs the protein to the mitochondrion. A 'HIGH' region motif is present at residues 43–53 (FYVNAAPHLGH). Residues 332-336 (KMSKS) carry the 'KMSKS' region motif. Lys335 serves as a coordination point for ATP.

Belongs to the class-I aminoacyl-tRNA synthetase family.

The protein resides in the mitochondrion matrix. It catalyses the reaction tRNA(Met) + L-methionine + ATP = L-methionyl-tRNA(Met) + AMP + diphosphate. This chain is Methionine--tRNA ligase, mitochondrial (mars2), found in Xenopus laevis (African clawed frog).